The sequence spans 250 residues: MKICLIDETGAGDGALSVLAARWGLEHDEDNLMALVLTPEHLELRKRDEPKLGGIFVDFVGGAMAHRRKFGGGRGEAVAKAVGIKGDYLPDVVDATAGLGRDAFVLASVGCRVRMLERNPVVAALLDDGLARGYADAEIGGWLQERLQLIHASSLTALTDITPRPQVVYLDPMFPHKQKSALVKKEMRVFQSLVGPDLDADGLLEPARLLATKRVVVKRPDYAPPLANVTTPNAVVTKGHRFDIYAGTPV.

Residues 101-102, 117-118, 153-154, and aspartate 171 each bind S-adenosyl-L-methionine; these read RD, ER, and SS.

Belongs to the methyltransferase superfamily. RsmJ family.

The protein resides in the cytoplasm. It carries out the reaction guanosine(1516) in 16S rRNA + S-adenosyl-L-methionine = N(2)-methylguanosine(1516) in 16S rRNA + S-adenosyl-L-homocysteine + H(+). Functionally, specifically methylates the guanosine in position 1516 of 16S rRNA. The protein is Ribosomal RNA small subunit methyltransferase J of Shigella boydii serotype 18 (strain CDC 3083-94 / BS512).